Here is a 638-residue protein sequence, read N- to C-terminus: 1-deoxy-D-xylulose-5-phosphate synthase (638 aa).

Residues His-78 and 119–121 (AHS) contribute to the thiamine diphosphate site. Asp-150 contacts Mg(2+). Thiamine diphosphate contacts are provided by residues 151-152 (GS), Asn-179, Tyr-288, and Glu-370. Mg(2+) is bound at residue Asn-179.

It belongs to the transketolase family. DXPS subfamily. Homodimer. Mg(2+) serves as cofactor. The cofactor is thiamine diphosphate.

It carries out the reaction D-glyceraldehyde 3-phosphate + pyruvate + H(+) = 1-deoxy-D-xylulose 5-phosphate + CO2. It functions in the pathway metabolic intermediate biosynthesis; 1-deoxy-D-xylulose 5-phosphate biosynthesis; 1-deoxy-D-xylulose 5-phosphate from D-glyceraldehyde 3-phosphate and pyruvate: step 1/1. In terms of biological role, catalyzes the acyloin condensation reaction between C atoms 2 and 3 of pyruvate and glyceraldehyde 3-phosphate to yield 1-deoxy-D-xylulose-5-phosphate (DXP). This Brucella anthropi (strain ATCC 49188 / DSM 6882 / CCUG 24695 / JCM 21032 / LMG 3331 / NBRC 15819 / NCTC 12168 / Alc 37) (Ochrobactrum anthropi) protein is 1-deoxy-D-xylulose-5-phosphate synthase.